The sequence spans 245 residues: Syntaxin-61 (245 aa).

Topologically, residues 1-224 (MSSAQDPFYI…VMKKAGAKGQ (224 aa)) are cytoplasmic. The 63-residue stretch at 153–215 (MLLIKQQDEE…EFVQKKVGMV (63 aa)) folds into the t-SNARE coiled-coil homology domain. A helical; Anchor for type IV membrane protein transmembrane segment spans residues 225–245 (MMMICFLLVLFIILFVLVFLT).

Belongs to the syntaxin family. In terms of assembly, interacts with VTI12 and either SYP41, SYP42 or SYP51 in the trans-Golgi network or with VTI11 and SYP51 in the prevacuolar compartment to form t-SNARE complexes. Core constituent of the SNARE complex required for membrane fusion at the trans-Golgi network. Also observed in the SYP121-complex and cellulose synthases. Colocalizes with PIP2-7 and SYP121 in trafficking vesicles and at the plasma membrane. Interacts with SYP121 and PIP2-7. In terms of tissue distribution, expressed in root, leaf, stem, flower and silique, but not in hypocotyl or young leaf. Strong expression in the vasculature and in guard cells of the leaf epidermis.

Its subcellular location is the golgi apparatus. The protein resides in the trans-Golgi network membrane. The protein localises to the prevacuolar compartment membrane. Vesicle trafficking protein that functions in the secretory pathway; the fusion of phospholipid vesicles containing SYP61 and VTI12 is triggered by YKT61 and YKT62. Together with VTI12, required for membrane fusion. Involved in osmotic stress tolerance and in abscisic acid (ABA) regulation of stomatal responses. Plays a role in the exocytic trafficking of cellulose synthases (CESAs) and the transport of cell wall components to the plasma membrane. Together with SYP121, regulates the post-Golgi trafficking of the aquaporin PIP2-7 to the plasma membrane, thus modulating cell membrane water permeability. This is Syntaxin-61 from Arabidopsis thaliana (Mouse-ear cress).